Here is an 88-residue protein sequence, read N- to C-terminus: Apolipoprotein C-I (88 aa).

Positions 1 to 26 (MRLFISLPILIVVLAMALEGPAPAQA) are cleaved as a signal peptide.

This sequence belongs to the apolipoprotein C1 family.

The protein localises to the secreted. Its function is as follows. Inhibitor of lipoprotein binding to the low density lipoprotein (LDL) receptor, LDL receptor-related protein, and very low density lipoprotein (VLDL) receptor. Associates with high density lipoproteins (HDL) and the triacylglycerol-rich lipoproteins in the plasma and makes up about 10% of the protein of the VLDL and 2% of that of HDL. Appears to interfere directly with fatty acid uptake and is also the major plasma inhibitor of cholesteryl ester transfer protein (CETP). Modulates the interaction of APOE with beta-migrating VLDL and inhibits binding of beta-VLDL to the LDL receptor-related protein. Binds free fatty acids and reduces their intracellular esterification. In Neotoma lepida (Desert woodrat), this protein is Apolipoprotein C-I (Apoc1).